Consider the following 60-residue polypeptide: Metallothionein (60 aa).

N-acetylmethionine is present on M1. Residues 1 to 28 form a beta region; sequence MDPCECSKTGTCNCGGSCTCKNCSCTTC. Positions 4, 6, 12, 14, 18, 20, 23, 25, 28, 32, 33, 35, 36, 40, 43, 47, 49, 54, 58, and 59 each coordinate a divalent metal cation. The alpha stretch occupies residues 29 to 60; the sequence is NKSCCPCCPSGCPKCASGCVCKGKTCDTSCCQ.

It belongs to the metallothionein superfamily. Type 1 family.

In terms of biological role, metallothioneins have a high content of cysteine residues that bind various heavy metals. The polypeptide is Metallothionein (mt) (Pleuronectes platessa (European plaice)).